Here is an 810-residue protein sequence, read N- to C-terminus: Janus kinase and microtubule-interacting protein 2 (810 aa).

Coiled-coil stretches lie at residues 13–102, 148–178, and 207–244; these read EALI…EMSR, ERLKLLQEIADLKTAKKQVDEALSNMIQADK, and RRLMDEIKAKDRIIFSLEKELETQTGYVQKLQLQKEAL. Over residues 261–274 the composition is skewed to basic and acidic residues; it reads PKREIPGRAGDGSE. Disordered regions lie at residues 261–280 and 437–465; these read PKREIPGRAGDGSEHCSSPD and YDEDSMDSETSSMASFRTDRTPATPDDDL. The stretch at 280 to 419 forms a coiled coil; sequence DLRRNQKRIA…REKLIRRRKH (140 aa). Coiled coils occupy residues 468–597 and 664–808; these read SLAA…RERR and EKWI…SNRK.

The protein belongs to the JAKMIP family. In terms of tissue distribution, highly expressed in brain, moderately expressed in thymus, spleen and lung, and weakly expressed in kidney, liver and peripheral blood lymphocytes. Also expressed in adrenal and pituitary glands, as well as testis.

The protein resides in the golgi apparatus. The sequence is that of Janus kinase and microtubule-interacting protein 2 (JAKMIP2) from Homo sapiens (Human).